The sequence spans 138 residues: ATP synthase epsilon chain, chloroplastic (138 aa).

This sequence belongs to the ATPase epsilon chain family. As to quaternary structure, F-type ATPases have 2 components, CF(1) - the catalytic core - and CF(0) - the membrane proton channel. CF(1) has five subunits: alpha(3), beta(3), gamma(1), delta(1), epsilon(1). CF(0) has three main subunits: a, b and c.

It is found in the plastid. The protein localises to the chloroplast thylakoid membrane. In terms of biological role, produces ATP from ADP in the presence of a proton gradient across the membrane. The sequence is that of ATP synthase epsilon chain, chloroplastic from Staurastrum punctulatum (Green alga).